Reading from the N-terminus, the 160-residue chain is MEHTIAVIPGSFDPITYGHLDIIERSTDRFDEIHVCVLKNSKKEGTFSLEERMDLIEQSVKHLPNVKVHQFSGLLVDYCEQVGAKTIIRGLRAVSDFEYELRLTSMNKKLNNEIETLYMMSSTNYSFISSSIVKEVAAYRADISEFVPPYVEKALKKKFK.

Position 11 (Ser11) interacts with substrate. ATP-binding positions include 11–12 and His19; that span reads SF. Positions 43, 75, and 89 each coordinate substrate. Residues 90-92, Glu100, and 125-131 contribute to the ATP site; these read GLR and YSFISSS.

The protein belongs to the bacterial CoaD family. Homohexamer. The cofactor is Mg(2+).

Its subcellular location is the cytoplasm. The catalysed reaction is (R)-4'-phosphopantetheine + ATP + H(+) = 3'-dephospho-CoA + diphosphate. It participates in cofactor biosynthesis; coenzyme A biosynthesis; CoA from (R)-pantothenate: step 4/5. Functionally, reversibly transfers an adenylyl group from ATP to 4'-phosphopantetheine, yielding dephospho-CoA (dPCoA) and pyrophosphate. This Staphylococcus aureus (strain Mu3 / ATCC 700698) protein is Phosphopantetheine adenylyltransferase.